We begin with the raw amino-acid sequence, 292 residues long: 33 kDa chaperonin (292 aa).

2 disulfide bridges follow: C230-C232 and C263-C266.

It belongs to the HSP33 family. In terms of processing, under oxidizing conditions two disulfide bonds are formed involving the reactive cysteines. Under reducing conditions zinc is bound to the reactive cysteines and the protein is inactive.

The protein resides in the cytoplasm. Its function is as follows. Redox regulated molecular chaperone. Protects both thermally unfolding and oxidatively damaged proteins from irreversible aggregation. Plays an important role in the bacterial defense system toward oxidative stress. This is 33 kDa chaperonin from Enterobacter sp. (strain 638).